Here is a 125-residue protein sequence, read N- to C-terminus: Glycine cleavage system H protein (125 aa).

The Lipoyl-binding domain occupies 22–104; the sequence is VATVGITIHA…EGEGWLFKLK (83 aa). K63 carries the post-translational modification N6-lipoyllysine.

It belongs to the GcvH family. The glycine cleavage system is composed of four proteins: P, T, L and H. Requires (R)-lipoate as cofactor.

The glycine cleavage system catalyzes the degradation of glycine. The H protein shuttles the methylamine group of glycine from the P protein to the T protein. The polypeptide is Glycine cleavage system H protein (Brucella abortus (strain 2308)).